We begin with the raw amino-acid sequence, 117 residues long: Multidrug resistance protein EbrB (117 aa).

Transmembrane regions (helical) follow at residues 3 to 23 (GLLY…MLKL), 31 to 51 (WPIA…SFSL), 59 to 79 (AYAT…FLLF), and 81 to 101 (ETIS…VVVL).

It belongs to the drug/metabolite transporter (DMT) superfamily. Small multidrug resistance (SMR) (TC 2.A.7.1) family. EbrA/EbrB subfamily. As to quaternary structure, the efflux pump is composed of EbrA and EbrB.

It is found in the cell membrane. Its function is as follows. Part of a multidrug efflux pump. Confers resistance to cationic lipophilic dyes such as ethidium bromide, acriflavine, pyronine Y and safranin O. The efflux is probably coupled to an influx of protons. The chain is Multidrug resistance protein EbrB (ebrB) from Bacillus subtilis (strain 168).